The primary structure comprises 190 residues: Imidazoleglycerol-phosphate dehydratase (190 aa).

Belongs to the imidazoleglycerol-phosphate dehydratase family.

The protein localises to the cytoplasm. The catalysed reaction is D-erythro-1-(imidazol-4-yl)glycerol 3-phosphate = 3-(imidazol-4-yl)-2-oxopropyl phosphate + H2O. Its pathway is amino-acid biosynthesis; L-histidine biosynthesis; L-histidine from 5-phospho-alpha-D-ribose 1-diphosphate: step 6/9. The polypeptide is Imidazoleglycerol-phosphate dehydratase (Nitratiruptor sp. (strain SB155-2)).